The sequence spans 225 residues: PKHD-type hydroxylase YbiX (225 aa).

Residues 78-177 (TLSTPLFNRY…RVASFMWIQS (100 aa)) enclose the Fe2OG dioxygenase domain. 3 residues coordinate Fe cation: histidine 96, aspartate 98, and histidine 158. Residue arginine 168 participates in 2-oxoglutarate binding.

Fe(2+) serves as cofactor. L-ascorbate is required as a cofactor.

This is PKHD-type hydroxylase YbiX from Escherichia coli O81 (strain ED1a).